A 155-amino-acid polypeptide reads, in one-letter code: Ribosome maturation factor RimP (155 aa).

It belongs to the RimP family.

The protein localises to the cytoplasm. Functionally, required for maturation of 30S ribosomal subunits. This Listeria welshimeri serovar 6b (strain ATCC 35897 / DSM 20650 / CCUG 15529 / CIP 8149 / NCTC 11857 / SLCC 5334 / V8) protein is Ribosome maturation factor RimP.